The chain runs to 35 residues: Mu/omega-theraphotoxin-Tap1a (35 aa).

Disulfide bonds link C3/C18, C10/C23, and C17/C30.

Belongs to the neurotoxin 10 (Hwtx-1) family. 59 (Tltx) subfamily. In terms of tissue distribution, expressed by the venom gland.

The protein localises to the secreted. Gating-modifier toxin that inhibits both sodium (Nav) and calcium (Cav3) channels by inducing hyperpolarizing shift in voltage-dependence of activation and steady state inactivation. Inhibits Nav1.1/SCN1A, Nav1.2/SCN2A, Nav1.3/SCN3A, Nav1.6/SCN6A, Nav1.7/SCN9A and Cav3.1/CACNA1G sodium and calcium channels at nanomolar concentrations (IC(50)=81-301 nM). Surprisingly, selectively slows fast inactivation of Nav1.3/SCN3A. Also shows moderate inhibition of Cav3.2/CACNA1H calcium channels (IC(50)=1233 nM). Ex vivo, nearly ablates neuronal mechanosensitivity in afferent fibers innervating the colon and the bladder. In vivo, in a mouse model of irritable bowel syndrome, intracolonic administration of the toxin reverses colonic mechanical hypersensitivity. In Theraphosa apophysis (Goliath pinkfoot tarantula), this protein is Mu/omega-theraphotoxin-Tap1a.